The primary structure comprises 378 residues: 3-dehydroquinate synthase (378 aa).

Residues 115–119 (GVVGD), 139–140 (TS), Lys152, and Lys161 contribute to the NAD(+) site. Zn(2+)-binding residues include Glu194, His256, and His275.

This sequence belongs to the sugar phosphate cyclases superfamily. Dehydroquinate synthase family. Requires Co(2+) as cofactor. It depends on Zn(2+) as a cofactor. The cofactor is NAD(+).

It localises to the cytoplasm. It carries out the reaction 7-phospho-2-dehydro-3-deoxy-D-arabino-heptonate = 3-dehydroquinate + phosphate. Its pathway is metabolic intermediate biosynthesis; chorismate biosynthesis; chorismate from D-erythrose 4-phosphate and phosphoenolpyruvate: step 2/7. Catalyzes the conversion of 3-deoxy-D-arabino-heptulosonate 7-phosphate (DAHP) to dehydroquinate (DHQ). This chain is 3-dehydroquinate synthase, found in Brucella canis (strain ATCC 23365 / NCTC 10854 / RM-666).